The primary structure comprises 474 residues: Bifunctional protein HldE (474 aa).

The tract at residues 1-318 (MKLSMPRFDQ…RAIQREEGSE (318 aa)) is ribokinase. 194–197 (NLSE) lines the ATP pocket. The active site involves aspartate 263. Positions 343–474 (FTNGCFDILH…AIVEKIRGQG (132 aa)) are cytidylyltransferase.

The protein in the N-terminal section; belongs to the carbohydrate kinase PfkB family. This sequence in the C-terminal section; belongs to the cytidylyltransferase family. As to quaternary structure, homodimer.

It carries out the reaction D-glycero-beta-D-manno-heptose 7-phosphate + ATP = D-glycero-beta-D-manno-heptose 1,7-bisphosphate + ADP + H(+). It catalyses the reaction D-glycero-beta-D-manno-heptose 1-phosphate + ATP + H(+) = ADP-D-glycero-beta-D-manno-heptose + diphosphate. It participates in nucleotide-sugar biosynthesis; ADP-L-glycero-beta-D-manno-heptose biosynthesis; ADP-L-glycero-beta-D-manno-heptose from D-glycero-beta-D-manno-heptose 7-phosphate: step 1/4. The protein operates within nucleotide-sugar biosynthesis; ADP-L-glycero-beta-D-manno-heptose biosynthesis; ADP-L-glycero-beta-D-manno-heptose from D-glycero-beta-D-manno-heptose 7-phosphate: step 3/4. Functionally, catalyzes the phosphorylation of D-glycero-D-manno-heptose 7-phosphate at the C-1 position to selectively form D-glycero-beta-D-manno-heptose-1,7-bisphosphate. Its function is as follows. Catalyzes the ADP transfer from ATP to D-glycero-beta-D-manno-heptose 1-phosphate, yielding ADP-D-glycero-beta-D-manno-heptose. This Pseudomonas syringae pv. tomato (strain ATCC BAA-871 / DC3000) protein is Bifunctional protein HldE.